The chain runs to 179 residues: Ribosome maturation factor RimM (179 aa).

The PRC barrel domain occupies K100–L176.

It belongs to the RimM family. Binds ribosomal protein uS19.

It is found in the cytoplasm. Its function is as follows. An accessory protein needed during the final step in the assembly of 30S ribosomal subunit, possibly for assembly of the head region. Essential for efficient processing of 16S rRNA. May be needed both before and after RbfA during the maturation of 16S rRNA. It has affinity for free ribosomal 30S subunits but not for 70S ribosomes. The chain is Ribosome maturation factor RimM from Prochlorococcus marinus (strain AS9601).